Reading from the N-terminus, the 97-residue chain is Glutamyl-tRNA(Gln) amidotransferase subunit C (97 aa).

Belongs to the GatC family. As to quaternary structure, heterotrimer of A, B and C subunits.

The enzyme catalyses L-glutamyl-tRNA(Gln) + L-glutamine + ATP + H2O = L-glutaminyl-tRNA(Gln) + L-glutamate + ADP + phosphate + H(+). It carries out the reaction L-aspartyl-tRNA(Asn) + L-glutamine + ATP + H2O = L-asparaginyl-tRNA(Asn) + L-glutamate + ADP + phosphate + 2 H(+). Allows the formation of correctly charged Asn-tRNA(Asn) or Gln-tRNA(Gln) through the transamidation of misacylated Asp-tRNA(Asn) or Glu-tRNA(Gln) in organisms which lack either or both of asparaginyl-tRNA or glutaminyl-tRNA synthetases. The reaction takes place in the presence of glutamine and ATP through an activated phospho-Asp-tRNA(Asn) or phospho-Glu-tRNA(Gln). This chain is Glutamyl-tRNA(Gln) amidotransferase subunit C, found in Saccharolobus solfataricus (strain ATCC 35092 / DSM 1617 / JCM 11322 / P2) (Sulfolobus solfataricus).